Consider the following 137-residue polypeptide: Venom allergen 4 (137 aa).

A signal peptide spans 1-19 (MKTFVLVSCLLVFTQIIYA).

This sequence belongs to the ant venom allergen 2/4 family. In terms of assembly, monomer. As to expression, expressed by the venom gland.

The protein resides in the secreted. The sequence is that of Venom allergen 4 from Solenopsis invicta (Red imported fire ant).